The primary structure comprises 85 residues: uncharacterized protein (85 aa).

The N-terminal stretch at 1–19 (MKTIFTVGAVVLATCLLSG) is a signal peptide. The N-palmitoyl cysteine moiety is linked to residue C20. The S-diacylglycerol cysteine moiety is linked to residue C20.

The protein resides in the cell outer membrane. This is an uncharacterized protein from Escherichia coli (strain K12).